Consider the following 451-residue polypeptide: Phenylalanine-4-hydroxylase (451 aa).

The residue at position 16 (S16) is a Phosphoserine; by PKA. The 79-residue stretch at 35-113 (SLIFSLKEEV…TVHELSRDKK (79 aa)) folds into the ACT domain. Fe cation contacts are provided by H284, H289, and E329.

This sequence belongs to the biopterin-dependent aromatic amino acid hydroxylase family. As to quaternary structure, homodimer and homotetramer. Requires Fe(2+) as cofactor. Post-translationally, phosphorylation at Ser-16 increases basal activity and facilitates activation by the substrate phenylalanine.

It carries out the reaction (6R)-L-erythro-5,6,7,8-tetrahydrobiopterin + L-phenylalanine + O2 = (4aS,6R)-4a-hydroxy-L-erythro-5,6,7,8-tetrahydrobiopterin + L-tyrosine. It functions in the pathway amino-acid degradation; L-phenylalanine degradation; acetoacetate and fumarate from L-phenylalanine: step 1/6. N-terminal region of PAH is thought to contain allosteric binding sites for phenylalanine and to constitute an 'inhibitory' domain that regulates the activity of a catalytic domain in the C-terminal portion of the molecule. Catalyzes the hydroxylation of L-phenylalanine to L-tyrosine. The sequence is that of Phenylalanine-4-hydroxylase (PAH) from Bos taurus (Bovine).